A 223-amino-acid chain; its full sequence is Ribosomal RNA small subunit methyltransferase G (223 aa).

S-adenosyl-L-methionine contacts are provided by residues G84, L89, 135–136, and R150; that span reads VE.

This sequence belongs to the methyltransferase superfamily. RNA methyltransferase RsmG family.

Its subcellular location is the cytoplasm. The enzyme catalyses guanosine(527) in 16S rRNA + S-adenosyl-L-methionine = N(7)-methylguanosine(527) in 16S rRNA + S-adenosyl-L-homocysteine. Its function is as follows. Specifically methylates the N7 position of guanine in position 527 of 16S rRNA. This Saccharophagus degradans (strain 2-40 / ATCC 43961 / DSM 17024) protein is Ribosomal RNA small subunit methyltransferase G.